Here is a 688-residue protein sequence, read N- to C-terminus: DNA ligase (688 aa).

NAD(+) contacts are provided by residues Asp42–Asp46, Ser91–Leu92, and Glu128. The N6-AMP-lysine intermediate role is filled by Lys130. NAD(+) contacts are provided by Arg151, Glu188, Lys305, and Lys329. Residues Cys423, Cys426, Cys441, and Cys447 each contribute to the Zn(2+) site. The 81-residue stretch at Ala608–Leu688 folds into the BRCT domain.

This sequence belongs to the NAD-dependent DNA ligase family. LigA subfamily. Requires Mg(2+) as cofactor. The cofactor is Mn(2+).

The enzyme catalyses NAD(+) + (deoxyribonucleotide)n-3'-hydroxyl + 5'-phospho-(deoxyribonucleotide)m = (deoxyribonucleotide)n+m + AMP + beta-nicotinamide D-nucleotide.. DNA ligase that catalyzes the formation of phosphodiester linkages between 5'-phosphoryl and 3'-hydroxyl groups in double-stranded DNA using NAD as a coenzyme and as the energy source for the reaction. It is essential for DNA replication and repair of damaged DNA. The chain is DNA ligase from Paraburkholderia xenovorans (strain LB400).